Consider the following 173-residue polypeptide: NADH-quinone oxidoreductase subunit I 1 (173 aa).

4Fe-4S ferredoxin-type domains are found at residues 41-73 and 83-112; these read IVLTRDPDGQERCVACNLCAVACPVGCIDLAKA and EHFRINFARCIFCGYCEEACPTAAIQLTPD. C53, C56, C59, C63, C92, C95, C98, and C102 together coordinate [4Fe-4S] cluster.

The protein belongs to the complex I 23 kDa subunit family. In terms of assembly, NDH-1 is composed of 14 different subunits. Subunits NuoA, H, J, K, L, M, N constitute the membrane sector of the complex. [4Fe-4S] cluster is required as a cofactor.

Its subcellular location is the cell inner membrane. The enzyme catalyses a quinone + NADH + 5 H(+)(in) = a quinol + NAD(+) + 4 H(+)(out). In terms of biological role, NDH-1 shuttles electrons from NADH, via FMN and iron-sulfur (Fe-S) centers, to quinones in the respiratory chain. The immediate electron acceptor for the enzyme in this species is believed to be ubiquinone. Couples the redox reaction to proton translocation (for every two electrons transferred, four hydrogen ions are translocated across the cytoplasmic membrane), and thus conserves the redox energy in a proton gradient. The chain is NADH-quinone oxidoreductase subunit I 1 from Rhodopseudomonas palustris (strain BisA53).